Consider the following 37-residue polypeptide: Brevinin-2DYe (37 aa).

Cys31 and Cys37 form a disulfide bridge.

In terms of tissue distribution, expressed by the skin glands.

It is found in the secreted. Functionally, antimicrobial peptide. Active against the Gram-positive bacterium S.aureus (MIC=15 uM) and the Gram-negative bacterium E.coli (MIC=30 uM). In Rana dybowskii (Dybovsky's frog), this protein is Brevinin-2DYe.